A 186-amino-acid chain; its full sequence is Adrenodoxin, mitochondrial (186 aa).

Residues 1–58 (MAARLLRVASAALGDTAGRWRLLARPRAGAGGLRGSRGPGLGGGAVATRTLSVSGRAQ) constitute a mitochondrion transit peptide. Residue serine 61 is modified to Phosphoserine. Residue lysine 64 is modified to N6-acetyllysine; alternate. At lysine 64 the chain carries N6-succinyllysine; alternate. Residues 65 to 169 (ITVHFINRDG…NMTVRVPDAV (105 aa)) enclose the 2Fe-2S ferredoxin-type domain. The [2Fe-2S] cluster site is built by cysteine 104, cysteine 110, cysteine 113, and cysteine 150. Position 156 is an N6-succinyllysine (lysine 156). Serine 175 is modified (phosphoserine).

The protein belongs to the adrenodoxin/putidaredoxin family. As to quaternary structure, interacts with CYP11A1. It depends on [2Fe-2S] cluster as a cofactor. In terms of tissue distribution, detected in adrenal cortex and corpus luteum (at protein level).

It is found in the mitochondrion matrix. Its function is as follows. Essential for the synthesis of various steroid hormones. Participates in the reduction of mitochondrial cytochrome P450 for steroidogenesis. Transfers electrons from adrenodoxin reductase to CYP11A1, a cytochrome P450 that catalyzes cholesterol side-chain cleavage to produce pregnenolone, the precursor of most steroid hormones. Does not form a ternary complex with adrenodoxin reductase and CYP11A1 but shuttles between the two enzymes to transfer electrons. This chain is Adrenodoxin, mitochondrial (FDX1), found in Bos taurus (Bovine).